A 418-amino-acid polypeptide reads, in one-letter code: Histidine--tRNA ligase (418 aa).

Belongs to the class-II aminoacyl-tRNA synthetase family.

It localises to the cytoplasm. It catalyses the reaction tRNA(His) + L-histidine + ATP = L-histidyl-tRNA(His) + AMP + diphosphate + H(+). The sequence is that of Histidine--tRNA ligase from Methanococcus maripaludis (strain C6 / ATCC BAA-1332).